The chain runs to 386 residues: All-trans-retinol dehydrogenase [NAD(+)] ADH7 (386 aa).

C59 provides a ligand contact to Zn(2+). 60–64 (RTDDH) is a binding site for NAD(+). Residues H80, C110, C113, C116, C124, and C186 each coordinate Zn(2+). Residues 211–216 (GLGGVG), D235, K240, 281–283 (IGH), 304–306 (VGV), 329–331 (CVF), and R381 contribute to the NAD(+) site.

Belongs to the zinc-containing alcohol dehydrogenase family. Class-IV subfamily. Homodimer. Zn(2+) is required as a cofactor. Preferentially expressed in stomach.

It localises to the cytoplasm. The catalysed reaction is a primary alcohol + NAD(+) = an aldehyde + NADH + H(+). The enzyme catalyses 10-hydroxydecanoate + NAD(+) = 10-oxodecanoate + NADH + H(+). It catalyses the reaction all-trans-retinol + NAD(+) = all-trans-retinal + NADH + H(+). It carries out the reaction 9-cis-retinol + NAD(+) = 9-cis-retinal + NADH + H(+). The catalysed reaction is all-trans-3,4-didehydroretinol + NAD(+) = all-trans-3,4-didehydroretinal + NADH + H(+). The enzyme catalyses all-trans-4-hydroxyretinol + NAD(+) = all-trans-4-hydroxyretinal + NADH + H(+). It catalyses the reaction all-trans-4-oxoretinol + NAD(+) = all-trans-4-oxoretinal + NADH + H(+). It carries out the reaction 12-hydroxydodecanoate + NAD(+) = 12-oxododecanoate + NADH + H(+). The catalysed reaction is 16-hydroxyhexadecanoate + NAD(+) = 16-oxohexadecanoate + NADH + H(+). The enzyme catalyses hexan-1-ol + NAD(+) = hexanal + NADH + H(+). It catalyses the reaction (E)-hex-2-en-1-ol + NAD(+) = (E)-hex-2-enal + NADH + H(+). It carries out the reaction (E)-4-hydroxynon-2-en-1-ol + NAD(+) = (E)-4-hydroxynon-2-enal + NADH + H(+). With respect to regulation, retinol oxidation is inhibited by the detergent Tween 80. Ethanol inhibits both all-trans-retinol and 9-cis-retinol oxidation. 13-cis-retinol is an effective competitive inhibitor of the 9-cis-retinol oxidation. All-trans-retinoic acid is a powerful inhibitor of all-trans-retinol oxidation. 13-cis-retinoic acid is a powerful inhibitor of all-trans-retinol oxidation. Cimetidine competitively inhibited ethanol oxidation. Catalyzes the NAD-dependent oxidation of all-trans-retinol, alcohol, and omega-hydroxy fatty acids and their derivatives. Oxidizes preferentially all trans-retinol, all-trans-4-hydroxyretinol, 9-cis-retinol, 2-hexenol, and long chain omega-hydroxy fatty acids such as juniperic acid. In vitro can also catalyze the NADH-dependent reduction of all-trans-retinal and aldehydes and their derivatives. Reduces preferentially all trans-retinal, all-trans-4-oxoretinal and hexanal. Catalyzes in the oxidative direction with higher efficiency. Therefore may participate in retinoid metabolism, fatty acid omega-oxidation, and elimination of cytotoxic aldehydes produced by lipid peroxidation. The polypeptide is All-trans-retinol dehydrogenase [NAD(+)] ADH7 (Homo sapiens (Human)).